A 305-amino-acid chain; its full sequence is Aspartate carbamoyltransferase catalytic subunit (305 aa).

Residues R51 and T52 each coordinate carbamoyl phosphate. K79 is an L-aspartate binding site. Carbamoyl phosphate contacts are provided by R101, H130, and Q133. L-aspartate is bound by residues R163 and R215. 2 residues coordinate carbamoyl phosphate: G256 and P257.

Belongs to the aspartate/ornithine carbamoyltransferase superfamily. ATCase family. In terms of assembly, heterododecamer (2C3:3R2) of six catalytic PyrB chains organized as two trimers (C3), and six regulatory PyrI chains organized as three dimers (R2).

The catalysed reaction is carbamoyl phosphate + L-aspartate = N-carbamoyl-L-aspartate + phosphate + H(+). It participates in pyrimidine metabolism; UMP biosynthesis via de novo pathway; (S)-dihydroorotate from bicarbonate: step 2/3. Functionally, catalyzes the condensation of carbamoyl phosphate and aspartate to form carbamoyl aspartate and inorganic phosphate, the committed step in the de novo pyrimidine nucleotide biosynthesis pathway. In Ehrlichia canis (strain Jake), this protein is Aspartate carbamoyltransferase catalytic subunit.